A 1843-amino-acid chain; its full sequence is Xin actin-binding repeat-containing protein 1 (1843 aa).

A compositionally biased stretch (polar residues) spans 1–10; it reads MADTQTQVAP. Residues 1–48 are disordered; that stretch reads MADTQTQVAPTPTMRMATAEDLPLPPPPALEDLPLPPPKESFSKFHQQ. An interaction with VASP region spans residues 1–54; it reads MADTQTQVAPTPTMRMATAEDLPLPPPPALEDLPLPPPKESFSKFHQQRQASEL. Residues 23–39 show a composition bias toward pro residues; sequence PLPPPPALEDLPLPPPK. 4 Xin repeats span residues 89–104, 121–136, 151–166, and 186–201; these read GDVQ…WRLD, GDVQ…GSFA, GDVR…KPLD, and GDVQ…RPLD. Positions 132 to 151 are disordered; it reads EGSFANSTDQEPTRPQPGGG. Phosphoserine occurs at positions 205, 208, and 213. Xin repeat units follow at residues 226–241 and 264–279; these read GDVK…EPLC and NAVR…RPLD. Ser295 carries the phosphoserine modification. The Xin 7 repeat unit spans residues 302–317; it reads PDVSATRWIFETQPLD. At Ser332 the chain carries Phosphoserine. Xin repeat units lie at residues 340-355 and 376-391; these read PDVQ…RALD and GDVR…KPLD. Residues 406 to 432 form a disordered region; sequence DPQDGEGHLSSDSSSALPFSQSAPQRD. Positions 415–429 are enriched in low complexity; it reads SSDSSSALPFSQSAP. Residues 436-451 form a Xin 10 repeat; it reads GDVKTFKNLFETLPLD. Positions 455 to 479 are disordered; the sequence is QGEVLAHGSPSREEGTDSAGQAQGI. Xin repeat units lie at residues 507–522 and 545–560; these read GDVQ…QPLD and GDVG…QPLE. The tract at residues 531-632 is interaction with CTNNB1; it reads IDVVRGITRQ…AQSCTWMFKP (102 aa). Positions 564 to 577 are enriched in basic and acidic residues; it reads QREQQERQKEEGKS. The segment at 564 to 591 is disordered; sequence QREQQERQKEEGKSQGDPQPEAPPKGDV. Xin repeat units lie at residues 589 to 604, 621 to 636, 654 to 669, 691 to 706, and 723 to 738; these read GDVQ…CPMS, AEAQ…QPVD, GERQ…EPLQ, GQVS…LEAG, and GSVH…CPMG. Disordered stretches follow at residues 943–999, 1063–1205, 1238–1277, 1289–1471, and 1561–1696; these read SLRW…QAIG, AEAQ…MAWG, SGPQ…HRAE, DPLL…QKEL, and MSSL…DVSV. Polar residues-rich tracts occupy residues 1064 to 1073 and 1080 to 1089; these read EAQSLHQQVL and PTPTATSNPI. Positions 1294 to 1311 are enriched in polar residues; sequence SHSSPAGQRTPGGSQTKT. Over residues 1357-1368 the composition is skewed to basic and acidic residues; the sequence is GQREHQRGERDT. Residues 1393-1424 are compositionally biased toward polar residues; sequence GHSQPSLQHGLSTTAPRPTKNQATGSNAQSSE. The stretch at 1462-1490 forms a coiled coil; that stretch reads DSLQRNQKELQGLLNQVQALEKEAASSVD. Polar residues-rich tracts occupy residues 1588 to 1600 and 1663 to 1679; these read VTVS…SGSG and SRDS…QSAT. Residues 1685-1843 are interaction with FLNC; it reads TPSFKGNPDV…SCSYSQPAAQ (159 aa).

It belongs to the Xin family. In terms of assembly, interacts (via N-terminus) with CTTN; the interaction promotes CTTN localization to intercalated disks in cardiomyocytes. Interacts with CTNNB1. Interacts with FLNC and VASP. Interacts with F-actin. In terms of tissue distribution, expressed in skeletal muscle at areas of Z-disk disruption in a longitudinal pattern spanning one or more sarcomeres (at protein level). As to expression, expressed in the heart (at protein level). Expressed in the heart.

It is found in the cell junction. The protein resides in the adherens junction. It localises to the desmosome. Its function is as follows. Protects actin filaments from depolymerization. Required for correct cardiac intercalated disk ultrastructure via maintenance of cell-cell adhesion stability, and as a result maintains cardiac organ morphology, conductance and heart beat rhythm. Required for development of normal skeletal muscle morphology and muscle fiber type composition. Plays a role in regulating muscle satellite cell activation and survival, as a result promotes muscle fiber recovery from injury and fatigue. This chain is Xin actin-binding repeat-containing protein 1, found in Homo sapiens (Human).